Reading from the N-terminus, the 234-residue chain is Adenosine 5'-phosphosulfate reductase (234 aa).

4 residues coordinate [4Fe-4S] cluster: cysteine 120, cysteine 121, cysteine 203, and cysteine 206. Catalysis depends on cysteine 229, which acts as the Nucleophile; cysteine thiosulfonate intermediate.

Belongs to the PAPS reductase family. CysH subfamily. [4Fe-4S] cluster is required as a cofactor.

It is found in the cytoplasm. The enzyme catalyses [thioredoxin]-disulfide + sulfite + AMP + 2 H(+) = adenosine 5'-phosphosulfate + [thioredoxin]-dithiol. The protein operates within sulfur metabolism; hydrogen sulfide biosynthesis; sulfite from sulfate. Its function is as follows. Catalyzes the formation of sulfite from adenosine 5'-phosphosulfate (APS) using thioredoxin as an electron donor. The polypeptide is Adenosine 5'-phosphosulfate reductase (Bacillus cereus (strain AH820)).